A 595-amino-acid polypeptide reads, in one-letter code: Cardiolipin synthase (CMP-forming) / mitochondrial hydrolase fusion protein (595 aa).

The transit peptide at 1 to 24 (MLHTINYRSWHLAARQLGRSTFRK) directs the protein to the mitochondrion. The next 2 membrane-spanning stretches (helical) occupy residues 538–560 (ALQLLLLGLLITEPILPFDASFA) and 564–586 (LFYIVGCTTIASGASYCISRNTF).

It in the N-terminal section; belongs to the HAD-like hydrolase superfamily. The protein in the C-terminal section; belongs to the CDP-alcohol phosphatidyltransferase class-I family. Mg(2+) is required as a cofactor. Proteolytically cleaved, presumably during its import into the mitochondrion by mitochondrial processing peptidase.

It localises to the mitochondrion. The protein resides in the mitochondrion inner membrane. The catalysed reaction is a CDP-1,2-diacyl-sn-glycerol + a 1,2-diacyl-sn-glycero-3-phospho-(1'-sn-glycerol) = a cardiolipin + CMP + H(+). Its function is as follows. Catalyzes the synthesis of cardiolipin (CL) (diphosphatidylglycerol) by specifically transferring a phosphatidyl group from CDP-diacylglycerol to phosphatidylglycerol (PG). CL is a key phospholipid in mitochondrial membranes and plays important roles in maintaining the functional integrity and dynamics of mitochondria under both optimal and stress conditions. Activity is dispensable for viability. The protein is Cardiolipin synthase (CMP-forming) / mitochondrial hydrolase fusion protein of Schizosaccharomyces pombe (strain 972 / ATCC 24843) (Fission yeast).